The following is a 248-amino-acid chain: MNKELLLGVNIDHIATIRQARGTRYPDPVQAAMDAEEAGADGITLHMREDLRHIQARDVRLIKQVLQTRMNLELAVTEAMLDFAEEILPEHACLVPEKREELTTEGGLDILTHRNVVERAVRRLQLMGSEVSLFIDPDKEQIRAAVDVGAPVIELHTGCYADATSEEKQHYELQRIKEAAEFAASLNLVVNAGHGLHYHNVKPIAAIRELNELNIGHAIIARALFCGLKEAVRHMRQLMQEARLYVND.

N10 is a 3-amino-2-oxopropyl phosphate binding site. 12 to 13 (DH) provides a ligand contact to 1-deoxy-D-xylulose 5-phosphate. 3-amino-2-oxopropyl phosphate is bound at residue R21. Residue H46 is the Proton acceptor of the active site. 2 residues coordinate 1-deoxy-D-xylulose 5-phosphate: R48 and H53. E73 acts as the Proton acceptor in catalysis. T103 provides a ligand contact to 1-deoxy-D-xylulose 5-phosphate. H194 serves as the catalytic Proton donor. 3-amino-2-oxopropyl phosphate contacts are provided by residues G195 and 216-217 (GH).

The protein belongs to the PNP synthase family. Homooctamer; tetramer of dimers.

The protein resides in the cytoplasm. It catalyses the reaction 3-amino-2-oxopropyl phosphate + 1-deoxy-D-xylulose 5-phosphate = pyridoxine 5'-phosphate + phosphate + 2 H2O + H(+). The protein operates within cofactor biosynthesis; pyridoxine 5'-phosphate biosynthesis; pyridoxine 5'-phosphate from D-erythrose 4-phosphate: step 5/5. Its function is as follows. Catalyzes the complicated ring closure reaction between the two acyclic compounds 1-deoxy-D-xylulose-5-phosphate (DXP) and 3-amino-2-oxopropyl phosphate (1-amino-acetone-3-phosphate or AAP) to form pyridoxine 5'-phosphate (PNP) and inorganic phosphate. This is Pyridoxine 5'-phosphate synthase from Legionella pneumophila (strain Paris).